The primary structure comprises 359 residues: Protein Wnt-5b (359 aa).

A signal peptide spans 1–17 (MPSLLLVVVAALLSSWA). Cys-83 and Cys-94 are joined by a disulfide. N-linked (GlcNAc...) asparagine glycosylation is found at Asn-93 and Asn-99. Cystine bridges form between Cys-133/Cys-141, Cys-143/Cys-161, Cys-217/Cys-231, Cys-219/Cys-226, Cys-288/Cys-319, Cys-304/Cys-314, Cys-318/Cys-358, Cys-334/Cys-349, Cys-336/Cys-346, and Cys-341/Cys-342. Residue Ser-223 is the site of O-palmitoleoyl serine; by PORCN attachment. 2 N-linked (GlcNAc...) asparagine glycosylation sites follow: Asn-291 and Asn-305.

The protein belongs to the Wnt family. As to quaternary structure, interacts with PORCN. Post-translationally, palmitoleoylation is required for efficient binding to frizzled receptors. Depalmitoleoylation leads to Wnt signaling pathway inhibition.

It localises to the secreted. It is found in the extracellular space. Its subcellular location is the extracellular matrix. In terms of biological role, ligand for members of the frizzled family of seven transmembrane receptors. Probable developmental protein. May be a signaling molecule which affects the development of discrete regions of tissues. Is likely to signal over only few cell diameters. In Mus musculus (Mouse), this protein is Protein Wnt-5b (Wnt5b).